Here is a 151-residue protein sequence, read N- to C-terminus: 3-hydroxyacyl-[acyl-carrier-protein] dehydratase FabZ (151 aa).

Histidine 54 is an active-site residue.

This sequence belongs to the thioester dehydratase family. FabZ subfamily. In terms of assembly, oligomer. In terms of processing, the N-terminus is blocked.

It localises to the cytoplasm. The enzyme catalyses a (3R)-hydroxyacyl-[ACP] = a (2E)-enoyl-[ACP] + H2O. Functionally, involved in unsaturated fatty acids biosynthesis. Catalyzes the dehydration of short chain beta-hydroxyacyl-ACPs and long chain saturated and unsaturated beta-hydroxyacyl-ACPs. In Escherichia coli O9:H4 (strain HS), this protein is 3-hydroxyacyl-[acyl-carrier-protein] dehydratase FabZ.